A 154-amino-acid polypeptide reads, in one-letter code: 6,7-dimethyl-8-ribityllumazine synthase (154 aa).

5-amino-6-(D-ribitylamino)uracil is bound by residues F23, 57-59 (AFE), and 81-83 (AII). 86 to 87 (ST) is a (2S)-2-hydroxy-3-oxobutyl phosphate binding site. H89 functions as the Proton donor in the catalytic mechanism. F114 provides a ligand contact to 5-amino-6-(D-ribitylamino)uracil. A (2S)-2-hydroxy-3-oxobutyl phosphate-binding site is contributed by R128.

The protein belongs to the DMRL synthase family.

The enzyme catalyses (2S)-2-hydroxy-3-oxobutyl phosphate + 5-amino-6-(D-ribitylamino)uracil = 6,7-dimethyl-8-(1-D-ribityl)lumazine + phosphate + 2 H2O + H(+). It functions in the pathway cofactor biosynthesis; riboflavin biosynthesis; riboflavin from 2-hydroxy-3-oxobutyl phosphate and 5-amino-6-(D-ribitylamino)uracil: step 1/2. Its function is as follows. Catalyzes the formation of 6,7-dimethyl-8-ribityllumazine by condensation of 5-amino-6-(D-ribitylamino)uracil with 3,4-dihydroxy-2-butanone 4-phosphate. This is the penultimate step in the biosynthesis of riboflavin. The sequence is that of 6,7-dimethyl-8-ribityllumazine synthase from Nitratiruptor sp. (strain SB155-2).